Consider the following 151-residue polypeptide: UPF0756 membrane protein Dred_1676 (151 aa).

4 helical membrane passes run 9–29 (VILL…CASV), 47–67 (THGL…PIAT), 75–95 (LLYN…ILAT), and 111–131 (IIFG…GQPV).

It belongs to the UPF0756 family.

The protein resides in the cell membrane. This Desulforamulus reducens (strain ATCC BAA-1160 / DSM 100696 / MI-1) (Desulfotomaculum reducens) protein is UPF0756 membrane protein Dred_1676.